The following is a 336-amino-acid chain: MKSAKKLLSVLCLGIFILTFTACDMVEKTPEAKAKSTIAKVNGEKIQRKDLDESPSMQQVLSQIKTQYGEEFEKSEQGKEVIKEQKKQILENLITEKVLLQKGKELKVIPKDEELNKEADKKVNEIKAVYNNDEKKFEETLKSTGFTKETLKEYLKDQIVIEKVINEVTKDVKVEDKDAQKYYNENQSMFTEKPNTMNVSHILVKTEDEAKKVKKRLDAKEDFAKVAKEVSQDTGSKDKGGLLGDISYSDSNFDPTFMKAAIALKSGAISNPVHTQFGYHIIKINSKKEYPVKKFDSVKEDIKKQLKQEKQQEAYTKKIEEWKKASKIKTYEKNLL.

The signal sequence occupies residues 1 to 22 (MKSAKKLLSVLCLGIFILTFTA). Cysteine 23 carries the N-palmitoyl cysteine lipid modification. Cysteine 23 carries S-diacylglycerol cysteine lipidation. In terms of domain architecture, PpiC spans 194 to 286 (PNTMNVSHIL…FGYHIIKINS (93 aa)).

This sequence belongs to the PrsA family.

The protein resides in the cell membrane. The enzyme catalyses [protein]-peptidylproline (omega=180) = [protein]-peptidylproline (omega=0). Functionally, plays a major role in protein secretion by helping the post-translocational extracellular folding of several secreted proteins. In Clostridium botulinum (strain Okra / Type B1), this protein is Foldase protein PrsA.